We begin with the raw amino-acid sequence, 941 residues long: RNA-directed RNA polymerase (941 aa).

The tract at residues 875 to 918 (SARQGGMGLPPPPPPPLGGGGMAGPPPPPFMGLRPESSVPTSVP) is disordered. Positions 905-918 (MGLRPESSVPTSVP) are enriched in low complexity.

In terms of assembly, forms a ribonucleoprotein complex with the 23S RNA, where a single polymerase molecule binds to a single viral RNA genome. Since the viral RNA is not encapsidated, ribonucleoprotein complex formation appears to be the strategy to survive in the host as persistent virus.

It is found in the host cytoplasm. It carries out the reaction RNA(n) + a ribonucleoside 5'-triphosphate = RNA(n+1) + diphosphate. RNA-directed RNA polymerase that replicates the viral (+) and (-) genome. In Saccharomyces 23S RNA narnavirus (ScNV-23S), this protein is RNA-directed RNA polymerase.